The chain runs to 264 residues: Small ribosomal subunit protein uS2 (264 aa).

The interval 228 to 264 (HEDVSAGPVEEQSDEAQAAEQGTEGDTAQLTSSQGRS) is disordered. Positions 251–264 (EGDTAQLTSSQGRS) are enriched in polar residues.

The protein belongs to the universal ribosomal protein uS2 family.

The chain is Small ribosomal subunit protein uS2 from Deinococcus radiodurans (strain ATCC 13939 / DSM 20539 / JCM 16871 / CCUG 27074 / LMG 4051 / NBRC 15346 / NCIMB 9279 / VKM B-1422 / R1).